The following is an 81-amino-acid chain: Defensin-like protein 144 (81 aa).

The N-terminal stretch at 1-24 (MKNSFRFSFTVITTFIICVLVSGA) is a signal peptide. Cystine bridges form between cysteine 30–cysteine 74, cysteine 42–cysteine 61, cysteine 47–cysteine 69, and cysteine 51–cysteine 71.

It belongs to the DEFL family.

Its subcellular location is the secreted. This chain is Defensin-like protein 144 (LCR10), found in Arabidopsis thaliana (Mouse-ear cress).